The sequence spans 371 residues: Chorismate synthase (371 aa).

The NADP(+) site is built by Arg-48 and Arg-54. FMN is bound by residues 130–132 (RSS), 242–243 (NA), Gly-287, 302–306 (KPTSS), and Arg-328.

This sequence belongs to the chorismate synthase family. Homotetramer. FMNH2 is required as a cofactor.

The catalysed reaction is 5-O-(1-carboxyvinyl)-3-phosphoshikimate = chorismate + phosphate. Its pathway is metabolic intermediate biosynthesis; chorismate biosynthesis; chorismate from D-erythrose 4-phosphate and phosphoenolpyruvate: step 7/7. In terms of biological role, catalyzes the anti-1,4-elimination of the C-3 phosphate and the C-6 proR hydrogen from 5-enolpyruvylshikimate-3-phosphate (EPSP) to yield chorismate, which is the branch point compound that serves as the starting substrate for the three terminal pathways of aromatic amino acid biosynthesis. This reaction introduces a second double bond into the aromatic ring system. The sequence is that of Chorismate synthase from Azorhizobium caulinodans (strain ATCC 43989 / DSM 5975 / JCM 20966 / LMG 6465 / NBRC 14845 / NCIMB 13405 / ORS 571).